The primary structure comprises 537 residues: Hexosyltransferase GAUT11 (537 aa).

Topologically, residues 1–16 (MRRWPVDHRRRGRRRL) are cytoplasmic. The chain crosses the membrane as a helical; Signal-anchor for type II membrane protein span at residues 17 to 37 (SSWIWFLLGSFSVAGLVLFIV). The Lumenal segment spans residues 38–537 (QHYHHQQDPS…HPYLQDCVTA (500 aa)). Asparagine 66, asparagine 247, asparagine 299, asparagine 403, asparagine 436, and asparagine 525 each carry an N-linked (GlcNAc...) asparagine glycan.

Belongs to the glycosyltransferase 8 family. In terms of assembly, monomer. Expressed in roots, inflorescences, siliques, seeds, leaves and stems.

Its subcellular location is the golgi apparatus membrane. The catalysed reaction is [(1-&gt;4)-alpha-D-galacturonosyl](n) + UDP-alpha-D-galacturonate = [(1-&gt;4)-alpha-D-galacturonosyl](n+1) + UDP + H(+). It participates in glycan metabolism; pectin biosynthesis. Functionally, glycosyltransferase involved in pectin and/or xylans biosynthesis in cell walls. Required for the biosynthesis of pectin in seed coat epidermal (SCE) cells. Collaboratively with MUCI70, essential for the accumulation of seed mucilage, a gelatinous wall rich in unbranched rhamnogalacturonan I (RG I), and for shaping the surface morphology of seeds. Catalyzes homogalacturonan (HG) elongation by acting as an HG alpha-1,4 galacturonic acid transferase. In Arabidopsis thaliana (Mouse-ear cress), this protein is Hexosyltransferase GAUT11.